Consider the following 94-residue polypeptide: Large ribosomal subunit protein bL27 (94 aa).

The propeptide occupies 1–9 (MLKMNLQFF).

This sequence belongs to the bacterial ribosomal protein bL27 family. The N-terminus is cleaved by ribosomal processing cysteine protease Prp.

This is Large ribosomal subunit protein bL27 from Halalkalibacterium halodurans (strain ATCC BAA-125 / DSM 18197 / FERM 7344 / JCM 9153 / C-125) (Bacillus halodurans).